Here is a 117-residue protein sequence, read N- to C-terminus: Large ribosomal subunit protein eL34 (117 aa).

The protein belongs to the eukaryotic ribosomal protein eL34 family. As to quaternary structure, component of the large ribosomal subunit.

The protein localises to the cytoplasm. Its subcellular location is the cytosol. It is found in the endoplasmic reticulum. In terms of biological role, component of the large ribosomal subunit. The ribosome is a large ribonucleoprotein complex responsible for the synthesis of proteins in the cell. The chain is Large ribosomal subunit protein eL34 (rpl34) from Danio rerio (Zebrafish).